Consider the following 379-residue polypeptide: 1-deoxy-D-xylulose 5-phosphate reductoisomerase (379 aa).

The NADPH site is built by Thr10, Gly11, Ser12, Ile13, Asn39, and Asn121. Position 122 (Lys122) interacts with 1-deoxy-D-xylulose 5-phosphate. Residue Glu123 coordinates NADPH. Residue Asp147 participates in Mn(2+) binding. Residues Ser148, Glu149, Ser173, and His196 each coordinate 1-deoxy-D-xylulose 5-phosphate. Residue Glu149 participates in Mn(2+) binding. Gly202 lines the NADPH pocket. 4 residues coordinate 1-deoxy-D-xylulose 5-phosphate: Ser209, Asn214, Lys215, and Glu218. Glu218 is a binding site for Mn(2+).

This sequence belongs to the DXR family. The cofactor is Mg(2+). Requires Mn(2+) as cofactor.

It catalyses the reaction 2-C-methyl-D-erythritol 4-phosphate + NADP(+) = 1-deoxy-D-xylulose 5-phosphate + NADPH + H(+). It participates in isoprenoid biosynthesis; isopentenyl diphosphate biosynthesis via DXP pathway; isopentenyl diphosphate from 1-deoxy-D-xylulose 5-phosphate: step 1/6. Its function is as follows. Catalyzes the NADPH-dependent rearrangement and reduction of 1-deoxy-D-xylulose-5-phosphate (DXP) to 2-C-methyl-D-erythritol 4-phosphate (MEP). This chain is 1-deoxy-D-xylulose 5-phosphate reductoisomerase, found in Chlamydia caviae (strain ATCC VR-813 / DSM 19441 / 03DC25 / GPIC) (Chlamydophila caviae).